The following is a 244-amino-acid chain: Uridylate kinase (244 aa).

ATP is bound at residue 15-18 (KLSG). The interval 23-28 (GSEGFG) is involved in allosteric activation by GTP. Residue Gly57 participates in UMP binding. Residues Gly58 and Arg62 each coordinate ATP. UMP is bound by residues Asp77 and 138-145 (TGNPFFTT). ATP contacts are provided by Thr165, Phe171, and Asp174.

The protein belongs to the UMP kinase family. As to quaternary structure, homohexamer.

It localises to the cytoplasm. It carries out the reaction UMP + ATP = UDP + ADP. It participates in pyrimidine metabolism; CTP biosynthesis via de novo pathway; UDP from UMP (UMPK route): step 1/1. Its activity is regulated as follows. Allosterically activated by GTP. Inhibited by UTP. Functionally, catalyzes the reversible phosphorylation of UMP to UDP. The protein is Uridylate kinase of Aeromonas salmonicida (strain A449).